A 119-amino-acid chain; its full sequence is Ribonuclease P protein component (119 aa).

It belongs to the RnpA family. Consists of a catalytic RNA component (M1 or rnpB) and a protein subunit.

It catalyses the reaction Endonucleolytic cleavage of RNA, removing 5'-extranucleotides from tRNA precursor.. Functionally, RNaseP catalyzes the removal of the 5'-leader sequence from pre-tRNA to produce the mature 5'-terminus. It can also cleave other RNA substrates such as 4.5S RNA. The protein component plays an auxiliary but essential role in vivo by binding to the 5'-leader sequence and broadening the substrate specificity of the ribozyme. The chain is Ribonuclease P protein component from Proteus mirabilis (strain HI4320).